The following is a 277-amino-acid chain: Putative thiosulfate sulfurtransferase (277 aa).

Rhodanese domains lie at 18-125 and 154-274; these read HAPK…PLSS and AINV…APIE. Cys233 (cysteine persulfide intermediate) is an active-site residue. Arg238 serves as a coordination point for substrate.

It carries out the reaction thiosulfate + hydrogen cyanide = thiocyanate + sulfite + 2 H(+). Its function is as follows. May be a sulfotransferase involved in the formation of thiosulfate. The protein is Putative thiosulfate sulfurtransferase (cysA1) of Mycobacterium tuberculosis (strain CDC 1551 / Oshkosh).